A 394-amino-acid chain; its full sequence is Dimethyladenosine transferase 2, mitochondrial (394 aa).

The N-terminal 19 residues, 1-19, are a transit peptide targeting the mitochondrion; it reads MWVPGAGIPSRLTLSAFTR. S-adenosyl-L-methionine contacts are provided by V75, E123, and D149. The tract at residues 326–327 is DNA-binding; the sequence is KR.

This sequence belongs to the class I-like SAM-binding methyltransferase superfamily. rRNA adenine N(6)-methyltransferase family. KsgA subfamily. In terms of assembly, homodimer. Component of the mitochondrial transcription initiation complex, composed at least of TFB2M, TFAM and POLRMT. In this complex TFAM recruits POLRMT to the promoter whereas TFB2M induces structural changes in POLRMT to enable promoter opening and trapping of the DNA non-template strand. Interacts with mitochondrial RNA polymerase POLRMT. Interacts with TFAM.

It is found in the mitochondrion. It carries out the reaction adenosine in rRNA + S-adenosyl-L-methionine = N(6)-methyladenosine in rRNA + S-adenosyl-L-homocysteine + H(+). Functionally, S-adenosyl-L-methionine-dependent rRNA methyltransferase which may methylate two specific adjacent adenosines in the loop of a conserved hairpin near the 3'-end of 12S mitochondrial rRNA. Component of the mitochondrial transcription initiation complex, composed at least of TFB2M, TFAM and POLRMT that is required for basal transcription of mitochondrial DNA. In this complex TFAM recruits POLRMT to a specific promoter whereas TFB2M induces structural changes in POLRMT to enable promoter opening and trapping of the DNA non-template strand. Stimulates transcription independently of the methyltransferase activity. In Bos taurus (Bovine), this protein is Dimethyladenosine transferase 2, mitochondrial.